The following is a 180-amino-acid chain: Protein SPO16 homolog (180 aa).

In terms of assembly, homooligomer. Interacts with SHOC, SYCP1 and SYCE3.

It localises to the chromosome. In terms of biological role, plays a key role in reinforcing the integrity of the central element of the synaptonemal complex (SC) thereby stabilizing SC, ensuring progression of meiotic prophase I in male and female germ cells. Promotes homologous recombination and crossing-over in meiotic prophase I via its association with SHOC1. Required for the localization of TEX11 and MSH4 to recombination intermediates. This Homo sapiens (Human) protein is Protein SPO16 homolog.